Here is a 552-residue protein sequence, read N- to C-terminus: HTH-type transcriptional regulator SgrR (552 aa).

The region spanning 1–116 (MPSARLQQQF…LVSHLGRSFR (116 aa)) is the HTH marR-type domain. The H-T-H motif DNA-binding region spans 26–49 (LNELAALLSCSRRHMRTLLNTMQD). Residues 163-492 (ELEADIAHHW…IDWQVDAARW (330 aa)) are solute-binding.

Its function is as follows. Activates the small RNA gene sgrS under glucose-phosphate stress conditions as well as yfdZ. Represses its own transcription under both stress and non-stress conditions. Might act as a sensor of the intracellular accumulation of phosphoglucose by binding these molecules in its C-terminal solute-binding domain. The polypeptide is HTH-type transcriptional regulator SgrR (Escherichia coli O157:H7).